The primary structure comprises 333 residues: Torsin-1A (333 aa).

Positions 1 to 20 (MKLGRAALALLLLAPCVVRA) are cleaved as a signal peptide. An interaction with SNAPIN region spans residues 92–252 (KPKKPLTLSL…VSVFNNKNSG (161 aa)). Position 103–110 (103–110 (GWTGTGKN)) interacts with ATP. N-linked (GlcNAc...) asparagine glycans are attached at residues Asn-144 and Asn-159. The tract at residues 252–333 (GFWHSSLIDR…FTKLDYYLDD (82 aa)) is interaction with KLC1. Residues 313–333 (KVFSDKGCKTVFTKLDYYLDD) are interaction with SYNE3.

The protein belongs to the ClpA/ClpB family. Torsin subfamily. Homohexamer. Interacts with TOR1B; the interaction may be specific of neural tissues. Interacts (ATP-bound) with TOR1AIP1 and TOR1AIP2; the interactions induce ATPase activity. Interacts with KLHL14; preferentially when ATP-free. Interacts with KLC1 (via TPR repeats); the interaction associates TOR1A with the kinesin oligomeric complex. Interacts with COPS4; the interaction associates TOR1A with the CSN complex. Interacts with SNAPIN; the interaction is direct and associates SNAPIN with the CSN complex. Interacts with STON2. Interacts (ATP-bound) with SYNE3 (via KASH domain); the interaction is required for SYNE3 nuclear envelope localization. Interacts with VIM; the interaction associates TOR1A with the cytoskeleton. Interacts with PLEC. Interacts (ATP-bound) with SLC6A3; regulates SLC6A3 transport to the plasma membrane. In terms of processing, N-glycosylated. In terms of tissue distribution, widely expressed (at protein level).

Its subcellular location is the endoplasmic reticulum lumen. It localises to the nucleus membrane. The protein resides in the cell projection. It is found in the growth cone. The protein localises to the cytoplasmic vesicle membrane. Its subcellular location is the synapse. It localises to the synaptosome. The protein resides in the cytoplasm. It is found in the cytoskeleton. The protein localises to the cytoplasmic vesicle. Its subcellular location is the secretory vesicle. It localises to the synaptic vesicle. The enzyme catalyses ATP + H2O = ADP + phosphate + H(+). Protein with chaperone functions important for the control of protein folding, processing, stability and localization as well as for the reduction of misfolded protein aggregates. Involved in the regulation of synaptic vesicle recycling, controls STON2 protein stability in collaboration with the COP9 signalosome complex (CSN). In the nucleus, may link the cytoskeleton with the nuclear envelope, this mechanism seems to be crucial for the control of nuclear polarity, cell movement and, specifically in neurons, nuclear envelope integrity. Participates in the cellular trafficking and may regulate the subcellular location of multipass membrane proteins such as the dopamine transporter SLC6A3, leading to the modulation of dopamine neurotransmission. In the endoplasmic reticulum, plays a role in the quality control of protein folding by increasing clearance of misfolded proteins such as SGCE variants or holding them in an intermediate state for proper refolding. May have a redundant function with TOR1B in non-neural tissues. This chain is Torsin-1A (Tor1a), found in Mus musculus (Mouse).